The following is a 918-amino-acid chain: Non-lysosomal glucosylceramidase (918 aa).

Positions 886 to 918 (HKKSRRPSVTQGTGLSTQPECGPKRSLANLNSE) are disordered. The span at 892–904 (PSVTQGTGLSTQP) shows a compositional bias: polar residues. Serine 893 is modified (phosphoserine).

It belongs to the non-lysosomal glucosylceramidase family. As to expression, widely expressed at low level. Highly expressed in testis and brain. Ubiquitously expressed in the brain (at protein level). Expressed by Sertoli cells (at protein level).

It is found in the endoplasmic reticulum membrane. The protein localises to the golgi apparatus membrane. The catalysed reaction is a beta-D-glucosyl-(1&lt;-&gt;1')-N-acylsphing-4-enine + H2O = an N-acylsphing-4-enine + D-glucose. It catalyses the reaction a beta-D-galactosyl-(1&lt;-&gt;1')-N-acylsphing-4-enine + H2O = an N-acylsphing-4-enine + D-galactose. The enzyme catalyses beta-D-glucosyl-(1-&gt;3)-O-lithocholate + H2O = lithocholate + D-glucose. It carries out the reaction beta-D-glucosyl-(1-&gt;3)-O-chenodeoxycholate + H2O = chenodeoxycholate + D-glucose. The catalysed reaction is a di-trans,poly-cis-dolichyl beta-D-glucosyl phosphate + chenodeoxycholate = beta-D-glucosyl-(1-&gt;3)-O-chenodeoxycholate + a di-trans,poly-cis-dolichyl phosphate + H(+). It catalyses the reaction octyl beta-D-glucose + chenodeoxycholate = beta-D-glucosyl-(1-&gt;3)-O-chenodeoxycholate + octan-1-ol. The enzyme catalyses cholesteryl 3-beta-D-glucoside + H2O = cholesterol + D-glucose. It carries out the reaction a beta-D-glucosyl-(1&lt;-&gt;1')-N-acylsphing-4-enine + cholesterol = cholesteryl 3-beta-D-glucoside + an N-acylsphing-4-enine. The catalysed reaction is beta-D-glucosyl-N-(9Z-octadecenoyl)-sphing-4E-enine + cholesterol = N-(9Z-octadecenoyl)-sphing-4-enine + cholesteryl 3-beta-D-glucoside. It catalyses the reaction a beta-D-galactosyl-(1&lt;-&gt;1')-N-acylsphing-4-enine + cholesterol = cholesteryl 3-beta-D-galactoside + an N-acylsphing-4-enine. The enzyme catalyses 1-(beta-D-galactosyl)-N-dodecanoylsphing-4-enine + cholesterol = cholesteryl 3-beta-D-galactoside + N-dodecanoylsphing-4-enine. The protein operates within lipid metabolism; sphingolipid metabolism. It functions in the pathway steroid metabolism; cholesterol metabolism. Its activity is regulated as follows. Enzymatic activity is dependent on membrane association and requires the presence of lipids. Inhibited by N-(adamantanemethyloxypentyl)-deoxynojirimycin/AMP-DNM. Inhibited by its product sphingosine/N-acylsphing-4-enine in a feedback loop. Also inhibited by other non-acetylated sphingoid bases and their derivatives but not by sphingosine-1-phosphate and complex sphingolipids. Functionally, non-lysosomal glucosylceramidase that catalyzes the hydrolysis of glucosylceramides/GlcCers (such as beta-D-glucosyl-(1&lt;-&gt;1')-N-acylsphing-4-enine) to free glucose and ceramides (such as N-acylsphing-4-enine). GlcCers are membrane glycosphingolipids that have a wide intracellular distribution. They are the main precursors of more complex glycosphingolipids that play a role in cellular growth, differentiation, adhesion, signaling, cytoskeletal dynamics and membrane properties. Also involved in the transglucosylation of cholesterol, transferring glucose from GlcCer, thereby modifying its water solubility and biological properties. Under specific conditions, may catalyze the reverse reaction, transferring glucose from cholesteryl-3-beta-D-glucoside to ceramide (such as N-acylsphing-4-enine). May play a role in the metabolism of bile acids. Able to hydrolyze bile acid 3-O-glucosides as well as to produce bile acid-glucose conjugates thanks to a bile acid glucosyl transferase activity. Catalyzes the hydrolysis of galactosylceramides/GalCers (such as beta-D-galactosyl-(1&lt;-&gt;1')-N-acylsphing-4-enine), as well as galactosyl transfer between GalCers and cholesterol in vitro with lower activity compared with their activity against GlcCers. The sequence is that of Non-lysosomal glucosylceramidase from Mus musculus (Mouse).